The following is a 153-amino-acid chain: Calmodulin-like protein 4 (153 aa).

EF-hand domains follow at residues 8-43, 44-79, 81-116, and 117-152; these read DAIQ…LGTC, PTPG…QQKQ, DPEN…MGEK, and LTPE…PVPD.

Belongs to the calmodulin family. As to quaternary structure, associates with the IMAC/intermicrovillar adhesion complex.

The protein localises to the cell projection. It localises to the microvillus. As part of the intermicrovillar adhesion complex/IMAC plays a role in epithelial brush border differentiation, controlling microvilli organization and length. Acts as a light chain for MYO7B and is required for efficient targeting of the IMAC to the tips of border brush microvilli. The chain is Calmodulin-like protein 4 (calml4) from Xenopus tropicalis (Western clawed frog).